The chain runs to 319 residues: Secreted effector protein sopD2 (319 aa).

A Required to target late endocytic compartments motif is present at residues 37 to 44; sequence WDRFKDCF.

This sequence belongs to the SopD family.

Its subcellular location is the secreted. It is found in the host cell membrane. Effector proteins function to alter host cell physiology and promote bacterial survival in host tissues. Contributes to the formation of Salmonella-induced filaments (Sifs) in infected epithelial cells and to replication in macrophages. In Salmonella typhimurium (strain LT2 / SGSC1412 / ATCC 700720), this protein is Secreted effector protein sopD2 (sopD2).